The primary structure comprises 333 residues: Fructose-1,6-bisphosphatase class 1 (333 aa).

Mg(2+) is bound by residues glutamate 92, aspartate 114, leucine 116, and aspartate 117. Residues 117-120 (DGSS) and asparagine 209 contribute to the substrate site. Glutamate 279 contacts Mg(2+).

Belongs to the FBPase class 1 family. Homotetramer. It depends on Mg(2+) as a cofactor.

Its subcellular location is the cytoplasm. It carries out the reaction beta-D-fructose 1,6-bisphosphate + H2O = beta-D-fructose 6-phosphate + phosphate. It functions in the pathway carbohydrate biosynthesis; gluconeogenesis. The chain is Fructose-1,6-bisphosphatase class 1 from Alkalilimnicola ehrlichii (strain ATCC BAA-1101 / DSM 17681 / MLHE-1).